We begin with the raw amino-acid sequence, 504 residues long: Glycerol kinase (504 aa).

Thr-12 is a binding site for ADP. Residues Thr-12, Thr-13, and Ser-14 each coordinate ATP. A sn-glycerol 3-phosphate-binding site is contributed by Thr-12. Arg-16 serves as a coordination point for ADP. Arg-82, Glu-83, Tyr-134, and Asp-246 together coordinate sn-glycerol 3-phosphate. Glycerol contacts are provided by Arg-82, Glu-83, Tyr-134, Asp-246, and Gln-247. The ADP site is built by Thr-268 and Gly-312. 4 residues coordinate ATP: Thr-268, Gly-312, Gln-316, and Gly-413. ADP-binding residues include Gly-413 and Asn-417.

Belongs to the FGGY kinase family.

The enzyme catalyses glycerol + ATP = sn-glycerol 3-phosphate + ADP + H(+). Its pathway is polyol metabolism; glycerol degradation via glycerol kinase pathway; sn-glycerol 3-phosphate from glycerol: step 1/1. With respect to regulation, inhibited by fructose 1,6-bisphosphate (FBP). Its function is as follows. Key enzyme in the regulation of glycerol uptake and metabolism. Catalyzes the phosphorylation of glycerol to yield sn-glycerol 3-phosphate. The sequence is that of Glycerol kinase from Paenarthrobacter aurescens (strain TC1).